We begin with the raw amino-acid sequence, 534 residues long: Light-independent protochlorophyllide reductase subunit B (534 aa).

A [4Fe-4S] cluster-binding site is contributed by Asp-36. Asp-274 acts as the Proton donor in catalysis. 409–410 provides a ligand contact to substrate; sequence GL. The segment at 426 to 446 is disordered; sequence DEAGPSHHGGKAVPASAPRAD.

The protein belongs to the ChlB/BchB/BchZ family. As to quaternary structure, protochlorophyllide reductase is composed of three subunits; BchL, BchN and BchB. Forms a heterotetramer of two BchB and two BchN subunits. Requires [4Fe-4S] cluster as cofactor.

The catalysed reaction is chlorophyllide a + oxidized 2[4Fe-4S]-[ferredoxin] + 2 ADP + 2 phosphate = protochlorophyllide a + reduced 2[4Fe-4S]-[ferredoxin] + 2 ATP + 2 H2O. The protein operates within porphyrin-containing compound metabolism; bacteriochlorophyll biosynthesis (light-independent). In terms of biological role, component of the dark-operative protochlorophyllide reductase (DPOR) that uses Mg-ATP and reduced ferredoxin to reduce ring D of protochlorophyllide (Pchlide) to form chlorophyllide a (Chlide). This reaction is light-independent. The NB-protein (BchN-BchB) is the catalytic component of the complex. The polypeptide is Light-independent protochlorophyllide reductase subunit B (Cereibacter sphaeroides (strain ATCC 17023 / DSM 158 / JCM 6121 / CCUG 31486 / LMG 2827 / NBRC 12203 / NCIMB 8253 / ATH 2.4.1.) (Rhodobacter sphaeroides)).